The following is a 329-amino-acid chain: Holliday junction branch migration complex subunit RuvB (329 aa).

Residues 1–180 (MKNILQSTEC…FGIPIHLEFY (180 aa)) form a large ATPase domain (RuvB-L) region. ATP is bound by residues I19, R20, G61, K64, T65, T66, 127–129 (EDF), R170, Y180, and R217. Mg(2+) is bound at residue T65. The segment at 181–252 (STEELIKVIQ…FADKALLRLG (72 aa)) is small ATPAse domain (RuvB-S). The segment at 255–329 (KLGLDRQDIQ…ISYLKEQSYI (75 aa)) is head domain (RuvB-H). 2 residues coordinate DNA: R308 and R313.

Belongs to the RuvB family. As to quaternary structure, homohexamer. Forms an RuvA(8)-RuvB(12)-Holliday junction (HJ) complex. HJ DNA is sandwiched between 2 RuvA tetramers; dsDNA enters through RuvA and exits via RuvB. An RuvB hexamer assembles on each DNA strand where it exits the tetramer. Each RuvB hexamer is contacted by two RuvA subunits (via domain III) on 2 adjacent RuvB subunits; this complex drives branch migration. In the full resolvosome a probable DNA-RuvA(4)-RuvB(12)-RuvC(2) complex forms which resolves the HJ.

The protein localises to the cytoplasm. It catalyses the reaction ATP + H2O = ADP + phosphate + H(+). Its function is as follows. The RuvA-RuvB-RuvC complex processes Holliday junction (HJ) DNA during genetic recombination and DNA repair, while the RuvA-RuvB complex plays an important role in the rescue of blocked DNA replication forks via replication fork reversal (RFR). RuvA specifically binds to HJ cruciform DNA, conferring on it an open structure. The RuvB hexamer acts as an ATP-dependent pump, pulling dsDNA into and through the RuvAB complex. RuvB forms 2 homohexamers on either side of HJ DNA bound by 1 or 2 RuvA tetramers; 4 subunits per hexamer contact DNA at a time. Coordinated motions by a converter formed by DNA-disengaged RuvB subunits stimulates ATP hydrolysis and nucleotide exchange. Immobilization of the converter enables RuvB to convert the ATP-contained energy into a lever motion, pulling 2 nucleotides of DNA out of the RuvA tetramer per ATP hydrolyzed, thus driving DNA branch migration. The RuvB motors rotate together with the DNA substrate, which together with the progressing nucleotide cycle form the mechanistic basis for DNA recombination by continuous HJ branch migration. Branch migration allows RuvC to scan DNA until it finds its consensus sequence, where it cleaves and resolves cruciform DNA. In Ehrlichia canis (strain Jake), this protein is Holliday junction branch migration complex subunit RuvB.